Consider the following 382-residue polypeptide: Galactokinase (382 aa).

Substrate is bound at residue 34–37 (EHTD). Residue 124–130 (GAGLSSS) coordinates ATP. Positions 130 and 162 each coordinate Mg(2+). The active-site Proton acceptor is the D174. Y223 is a substrate binding site.

It belongs to the GHMP kinase family. GalK subfamily.

It localises to the cytoplasm. It carries out the reaction alpha-D-galactose + ATP = alpha-D-galactose 1-phosphate + ADP + H(+). The protein operates within carbohydrate metabolism; galactose metabolism. In terms of biological role, catalyzes the transfer of the gamma-phosphate of ATP to D-galactose to form alpha-D-galactose-1-phosphate (Gal-1-P). In Escherichia coli O7:K1 (strain IAI39 / ExPEC), this protein is Galactokinase.